The following is a 174-amino-acid chain: Protein VdlD (174 aa).

The 113-residue stretch at 20 to 132 (DRTKLLMSYL…YFTMVAVENG (113 aa)) folds into the HotDog ACOT-type domain.

This sequence belongs to the acyl coenzyme A hydrolase family.

This Helicobacter pylori (strain J99 / ATCC 700824) (Campylobacter pylori J99) protein is Protein VdlD (vdlD).